The sequence spans 150 residues: Cytochrome b5 type B (150 aa).

Positions 1-15 are excised as a propeptide; sequence MSGSMATAEASGSDG. Residues 1–20 form a disordered region; sequence MSGSMATAEASGSDGKGQEV. Serine 23 carries the phosphoserine modification. Residues 24 to 100 form the Cytochrome b5 heme-binding domain; the sequence is VTYYRLEEVA…LKQYYIGDIH (77 aa). The residue at position 34 (lysine 34) is an N6-acetyllysine. Serine 37 bears the Phosphoserine mark. Lysine 39 bears the N6-methyllysine mark. Residues histidine 59 and histidine 83 each contribute to the heme site. Serine 84 is modified (phosphoserine). Residues 123–140 traverse the membrane as a helical segment; it reads WAYWILPIIGAVLLGFLY.

The protein belongs to the cytochrome b5 family. In terms of assembly, component of a complex composed of cytochrome b5, NADH-cytochrome b5 reductase (CYB5R3) and MTARC2.

The protein resides in the mitochondrion outer membrane. Its function is as follows. Cytochrome b5 is a membrane-bound hemoprotein functioning as an electron carrier for several membrane-bound oxygenases. This chain is Cytochrome b5 type B (CYB5B), found in Homo sapiens (Human).